A 122-amino-acid chain; its full sequence is Photosystem II extrinsic protein U (122 aa).

The N-terminal stretch at 1 to 30 (MRWLLSILVRVVLVLCLCFAPLGIPVVARA) is a signal peptide.

This sequence belongs to the PsbU family. PSII is composed of 1 copy each of membrane proteins PsbA, PsbB, PsbC, PsbD, PsbE, PsbF, PsbH, PsbI, PsbJ, PsbK, PsbL, PsbM, PsbT, PsbX, PsbY, PsbZ, Psb30/Ycf12, peripheral proteins PsbO, CyanoQ (PsbQ), PsbU, PsbV and a large number of cofactors. It forms dimeric complexes.

The protein resides in the cellular thylakoid membrane. In terms of biological role, one of the extrinsic, lumenal subunits of photosystem II (PSII). PSII is a light-driven water plastoquinone oxidoreductase, using light energy to abstract electrons from H(2)O, generating a proton gradient subsequently used for ATP formation. The extrinsic proteins stabilize the structure of photosystem II oxygen-evolving complex (OEC), the ion environment of oxygen evolution and protect the OEC against heat-induced inactivation. This Synechococcus sp. (strain JA-2-3B'a(2-13)) (Cyanobacteria bacterium Yellowstone B-Prime) protein is Photosystem II extrinsic protein U.